The primary structure comprises 237 residues: MEIIPAIDMQGGRCVRLYQGDFQRVTVYDDDPVAVAHRWVAQGAPRLHLVDLDGARSGHPVHTDIIRAIVQSVDAPVQLGGGLRSIAAVERALELGVQRVILGTAAVHDPELIRQLVQQFGDAIAIAVDARNDMAATAGWTETAAISAIDLVERMAALGVRRVIYTDIARDGTLSEPNIATTRALVRPGGPAIIASGGISTIDHLRRLAEVGVEGAIVGRALYTGDLSLSDALAAVQ.

Aspartate 8 acts as the Proton acceptor in catalysis. Aspartate 129 acts as the Proton donor in catalysis.

It belongs to the HisA/HisF family.

The protein localises to the cytoplasm. It catalyses the reaction 1-(5-phospho-beta-D-ribosyl)-5-[(5-phospho-beta-D-ribosylamino)methylideneamino]imidazole-4-carboxamide = 5-[(5-phospho-1-deoxy-D-ribulos-1-ylimino)methylamino]-1-(5-phospho-beta-D-ribosyl)imidazole-4-carboxamide. It functions in the pathway amino-acid biosynthesis; L-histidine biosynthesis; L-histidine from 5-phospho-alpha-D-ribose 1-diphosphate: step 4/9. The polypeptide is 1-(5-phosphoribosyl)-5-[(5-phosphoribosylamino)methylideneamino] imidazole-4-carboxamide isomerase (Roseiflexus sp. (strain RS-1)).